Reading from the N-terminus, the 348-residue chain is Nuclear receptor subfamily 1 group I member 3 (348 aa).

Positions 8–83 (PRSCMVCGDR…AGMKKEMILS (76 aa)) form a DNA-binding region, nuclear receptor. The segment at 11–31 (CMVCGDRATGYHFHALTCEGC) adopts an NR C4-type zinc-finger fold. Thr38 is subject to Phosphothreonine; by PKC. The NR C4-type zinc finger occupies 47 to 71 (CPFAGSCKVNKAQRRHCPACRLQKC). The NR LBD domain maps to 109 to 348 (GQQELVQTLL…MMPLLQEICS (240 aa)).

This sequence belongs to the nuclear hormone receptor family. NR1 subfamily. In terms of assembly, heterodimer of NR1I3 and RXR. Interacts with PSMC4. Interacts with ECT2. Directly interacts with DNAJC7; this complex may also include HSP90. Interacts with CRY1. Interacts with CRY2 in a ligand-dependent manner. Post-translationally, phosphorylated at Thr-38 by PKC, dephosphorylation of Thr-38 is required for nuclear translocation and activation.

It is found in the nucleus. It localises to the cytoplasm. The protein localises to the cytoskeleton. Functionally, binds and transactivates the retinoic acid response elements that control expression of the retinoic acid receptor beta 2 and alcohol dehydrogenase 3 genes. Transactivates both the phenobarbital responsive element module of the human CYP2B6 gene and the CYP3A4 xenobiotic response element. This chain is Nuclear receptor subfamily 1 group I member 3 (NR1I3), found in Pusa sibirica (Baikal seal).